We begin with the raw amino-acid sequence, 177 residues long: Large ribosomal subunit protein uL6 (177 aa).

Belongs to the universal ribosomal protein uL6 family. As to quaternary structure, part of the 50S ribosomal subunit.

Its function is as follows. This protein binds to the 23S rRNA, and is important in its secondary structure. It is located near the subunit interface in the base of the L7/L12 stalk, and near the tRNA binding site of the peptidyltransferase center. This chain is Large ribosomal subunit protein uL6, found in Glaesserella parasuis serovar 5 (strain SH0165) (Haemophilus parasuis).